A 688-amino-acid polypeptide reads, in one-letter code: Glycine--tRNA ligase beta subunit (688 aa).

The protein belongs to the class-II aminoacyl-tRNA synthetase family. Tetramer of two alpha and two beta subunits.

It localises to the cytoplasm. The catalysed reaction is tRNA(Gly) + glycine + ATP = glycyl-tRNA(Gly) + AMP + diphosphate. This Chromohalobacter salexigens (strain ATCC BAA-138 / DSM 3043 / CIP 106854 / NCIMB 13768 / 1H11) protein is Glycine--tRNA ligase beta subunit.